A 147-amino-acid chain; its full sequence is Phosphoribosyl-AMP cyclohydrolase (147 aa).

Aspartate 91 lines the Mg(2+) pocket. Position 92 (cysteine 92) interacts with Zn(2+). Residues aspartate 93 and aspartate 95 each contribute to the Mg(2+) site. Positions 109 and 116 each coordinate Zn(2+).

It belongs to the PRA-CH family. Homodimer. Requires Mg(2+) as cofactor. The cofactor is Zn(2+).

The protein resides in the cytoplasm. The catalysed reaction is 1-(5-phospho-beta-D-ribosyl)-5'-AMP + H2O = 1-(5-phospho-beta-D-ribosyl)-5-[(5-phospho-beta-D-ribosylamino)methylideneamino]imidazole-4-carboxamide. The protein operates within amino-acid biosynthesis; L-histidine biosynthesis; L-histidine from 5-phospho-alpha-D-ribose 1-diphosphate: step 3/9. In terms of biological role, catalyzes the hydrolysis of the adenine ring of phosphoribosyl-AMP. In Rhodopseudomonas palustris (strain BisA53), this protein is Phosphoribosyl-AMP cyclohydrolase.